Here is an 859-residue protein sequence, read N- to C-terminus: DNA mismatch repair protein MutS (859 aa).

An ATP-binding site is contributed by 617–624 (GPNMGGKS). Positions 801 to 820 (TSLPHEVAPQAPGKPSVPQQ) are disordered.

Belongs to the DNA mismatch repair MutS family.

This protein is involved in the repair of mismatches in DNA. It is possible that it carries out the mismatch recognition step. This protein has a weak ATPase activity. In Pseudomonas fluorescens (strain ATCC BAA-477 / NRRL B-23932 / Pf-5), this protein is DNA mismatch repair protein MutS.